A 68-amino-acid chain; its full sequence is Large ribosomal subunit protein bL33c (68 aa).

Belongs to the bacterial ribosomal protein bL33 family.

Its subcellular location is the plastid. The protein localises to the chloroplast. This Piper cenocladum (Ant piper) protein is Large ribosomal subunit protein bL33c.